The sequence spans 108 residues: Parvalbumin beta 2 (108 aa).

An N-acetylalanine modification is found at Ala1. EF-hand domains are found at residues Lys38–Gly73 and Leu77–Gly108. Ca(2+) contacts are provided by Asp51, Asp53, Ser55, Phe57, Glu59, Glu62, Asp90, Asp92, Asp94, Lys96, and Glu101.

The protein belongs to the parvalbumin family.

Functionally, in muscle, parvalbumin is thought to be involved in relaxation after contraction. It binds two calcium ions. The protein is Parvalbumin beta 2 of Merluccius bilinearis (Silver hake).